The chain runs to 393 residues: Putative N(4)-(beta-N-acetylglucosaminyl)-L-asparaginase GH22932 (393 aa).

Residues 15 to 41 (ALKPITNSSSDTITPNPNLITTSRGSS) form a disordered region. Over residues 19-41 (ITNSSSDTITPNPNLITTSRGSS) the composition is skewed to polar residues. 2 disulfide bridges follow: cysteine 100/cysteine 105 and cysteine 199/cysteine 215. The Nucleophile role is filled by threonine 246. Substrate-binding positions include 274 to 277 (RVGD) and 297 to 300 (TGDG). Residues cysteine 357 and cysteine 381 are joined by a disulfide bond.

The protein belongs to the Ntn-hydrolase family. As to quaternary structure, heterotetramer of two alpha and two beta chains arranged as a dimer of alpha/beta heterodimers. In terms of processing, cleaved into an alpha and beta chain by autocatalysis; this activates the enzyme. The N-terminal residue of the beta subunit is responsible for the nucleophile hydrolase activity.

It catalyses the reaction N(4)-(beta-N-acetyl-D-glucosaminyl)-L-asparagine + H2O = N-acetyl-beta-D-glucosaminylamine + L-aspartate + H(+). Cleaves the GlcNAc-Asn bond which joins oligosaccharides to the peptide of asparagine-linked glycoproteins. This chain is Putative N(4)-(beta-N-acetylglucosaminyl)-L-asparaginase GH22932, found in Drosophila grimshawi (Hawaiian fruit fly).